Here is a 1819-residue protein sequence, read N- to C-terminus: Non-reducing polyketide synthase nscA (1819 aa).

The interval 25–277 is N-terminal acylcarrier protein transacylase domain (SAT); it reads RRLDQHSKDR…PLPVYDGLCH (253 aa). Positions 413–846 constitute a Ketosynthase family 3 (KS3) domain; that stretch reads SSKLAIVGMA…GGNTTLLLED (434 aa). Catalysis depends on for beta-ketoacyl synthase activity residues C586, H721, and H764. Residues 952–1249 form a malonyl-CoA:ACP transacylase (MAT) domain region; the sequence is FTSQGAYYHG…MIPSAPAMSS (298 aa). The interval 1339-1658 is product template (PT) domain; the sequence is TSLVHQITAE…RLLMDRFFSP (320 aa). Residues 1343–1479 form an N-terminal hotdog fold region; sequence HQITAETVEA…AMIRFEDPMA (137 aa). Residues 1343-1653 enclose the PKS/mFAS DH domain; the sequence is HQITAETVEA…IRRVPRLLMD (311 aa). The active-site Proton acceptor; for dehydratase activity is H1375. The interval 1507-1653 is C-terminal hotdog fold; it reads ASRLSKPLAY…IRRVPRLLMD (147 aa). D1564 serves as the catalytic Proton donor; for dehydratase activity. The interval 1703-1742 is disordered; the sequence is SSTMASKAPEPAPLLATSSESSTPKESPIVTPAESEREDP. A compositionally biased stretch (low complexity) spans 1719–1730; it reads TSSESSTPKESP. The region spanning 1742-1819 is the Carrier domain; that stretch reads PVDNNMISQC…EMTAWIEEYC (78 aa). S1779 is modified (O-(pantetheine 4'-phosphoryl)serine).

Pantetheine 4'-phosphate is required as a cofactor.

The protein operates within secondary metabolite biosynthesis. In terms of biological role, non-reducing polyketide synthase; part of the gene cluster that mediates the biosynthesis of neosartoricin B, a prenylated anthracenone that probably exhibits T-cell antiproliferative activity, suggestive of a physiological role as an immunosuppressive agent. The non-reducing polyketide synthase nscA probably synthesizes and cyclizes the decaketide backbone. The hydrolase nscB then mediates the product release through hydrolysis followed by spontaneous decarboxylation. The prenyltransferase nscD catalyzes the addition of the dimethylallyl group to the aromatic C5. The FAD-dependent monooxygenase nscC is then responsible for the stereospecific hydroxylation at C2. Neosartoricin B can be converted into two additional compounds neosartoricins C and D. Neosartoricin C is a spirocyclic compound that is cyclized through the attack of C3 hydroxyl on C14, followed by dehydration. On the other hand, neosartoricin D is a further cyclized compound in which attack of C2 on C14 in neosartoricin C results in the formation of the acetal-containing dioxabicyclo-octanone ring. Both of these compounds are novel and possibly represent related metabolites of the gene cluster. This is Non-reducing polyketide synthase nscA from Trichophyton verrucosum (strain HKI 0517).